The following is a 945-amino-acid chain: Collagen-like protein 1 (945 aa).

2 disordered regions span residues 80-226 (SLKG…SPDL) and 257-441 (GEKG…DKGE). 2 consecutive Collagen-like domains span residues 83 to 142 (GDPG…QGDK) and 146 to 205 (GDVG…KGDK). Composition is skewed to basic and acidic residues over residues 109–145 (QGTK…KGDQ) and 168–208 (DQGD…KGDK). The N-linked (GlcNAc...) asparagine; by host glycan is linked to Asn-211. Collagen-like domains follow at residues 257–376 (GEKG…KGDK), 383–442 (GDKG…KGEN), 488–547 (GEKG…VGDK), 554–613 (GDKG…KGDV), and 635–694 (GDKG…VGAS). Asn-442 carries N-linked (GlcNAc...) asparagine; by host glycosylation. A compositionally biased stretch (basic and acidic residues) spans 488-687 (GEKGDKGDTG…DKGDKGDKGD (200 aa)). Positions 488–712 (GEKGDKGDTG…SPTTGENGDS (225 aa)) are disordered. The span at 703–712 (SPTTGENGDS) shows a compositional bias: polar residues. N-linked (GlcNAc...) asparagine; by host glycosylation occurs at Asn-716. Residues 733–768 (TNIKGDKGDKGDKGDKGDKGDTGDVGLKGDTGTPGS) form a disordered region. The span at 736–754 (KGDKGDKGDKGDKGDKGDT) shows a compositional bias: basic and acidic residues. Residues 756-765 (DVGLKGDTGT) are compositionally biased toward low complexity.

May be hydroxylated on lysine by the viral-encoded procollagen-lysine,2-oxoglutarate 5-dioxygenase.

Its subcellular location is the virion. Its function is as follows. May participate in the formation of a layer of cross-linked glycosylated fibrils at the viral surface thus giving it a hairy-like appearance. This chain is Collagen-like protein 1, found in Acanthamoeba polyphaga mimivirus (APMV).